Consider the following 684-residue polypeptide: Glycine--tRNA ligase beta subunit (684 aa).

Belongs to the class-II aminoacyl-tRNA synthetase family. Tetramer of two alpha and two beta subunits.

The protein localises to the cytoplasm. It carries out the reaction tRNA(Gly) + glycine + ATP = glycyl-tRNA(Gly) + AMP + diphosphate. This chain is Glycine--tRNA ligase beta subunit, found in Pseudomonas aeruginosa (strain LESB58).